Consider the following 526-residue polypeptide: Fumitremorgin C synthase (526 aa).

The helical transmembrane segment at 4–24 (LPLSPAVLFLTITLPILYFWI) threads the bilayer. Residue Cys-443 coordinates heme.

The protein belongs to the cytochrome P450 family. The cofactor is heme.

The protein localises to the membrane. It catalyses the reaction tryprostatin A + reduced [NADPH--hemoprotein reductase] + O2 = fumitremorgin C + oxidized [NADPH--hemoprotein reductase] + 2 H2O + H(+). The protein operates within mycotoxin biosynthesis. Functionally, cytochrome P450 monooxygenase; part of the gene cluster that mediates the biosynthesis of fumitremorgins, indole alkaloids that carry not only intriguing chemical structures, but also interesting biological and pharmacological activities. The biosynthesis of fumitremorgin-type alkaloids begins by condensation of the two amino acids L-tryptophan and L-proline to brevianamide F, catalyzed by the non-ribosomal peptide synthetase ftmPS/ftmA. Brevianamide F is then prenylated by the prenyltransferase ftmPT1/ftmB in the presence of dimethylallyl diphosphate, resulting in the formation of tryprostatin B. The three cytochrome P450 monooxygenases, ftmP450-1/ftmC, ftmP450-2/ftmE and ftmP450-3/FtmG, are responsible for the conversion of tryprostatin B to 6-hydroxytryprostatin B, tryprostatin A to fumitremorgin C and fumitremorgin C to 12,13-dihydroxyfumitremorgin C, respectively. The putative methyltransferase ftmMT/ftmD is expected for the conversion of 6-hydroxytryprostatin B to tryprostatin A. FtmPT2/FtmH catalyzes the prenylation of 12,13-dihydroxyfumitre-morgin C in the presence of dimethylallyl diphosphate, resulting in the formation of fumitremorgin B. Fumitremorgin B is further converted to verruculogen by ftmOx1/ftmF via the insertion of an endoperoxide bond between the two prenyl moieties. Finally, verruculogen is further converted to fumitremorgin A by the verruculogen prenyltransferase ftmPT3. The protein is Fumitremorgin C synthase of Neosartorya fischeri (strain ATCC 1020 / DSM 3700 / CBS 544.65 / FGSC A1164 / JCM 1740 / NRRL 181 / WB 181) (Aspergillus fischerianus).